Consider the following 307-residue polypeptide: UDP-3-O-acyl-N-acetylglucosamine deacetylase (307 aa).

Zn(2+) is bound by residues His80, His239, and Asp243. The active-site Proton donor is the His266.

Belongs to the LpxC family. Requires Zn(2+) as cofactor.

It carries out the reaction a UDP-3-O-[(3R)-3-hydroxyacyl]-N-acetyl-alpha-D-glucosamine + H2O = a UDP-3-O-[(3R)-3-hydroxyacyl]-alpha-D-glucosamine + acetate. Its pathway is glycolipid biosynthesis; lipid IV(A) biosynthesis; lipid IV(A) from (3R)-3-hydroxytetradecanoyl-[acyl-carrier-protein] and UDP-N-acetyl-alpha-D-glucosamine: step 2/6. Its function is as follows. Catalyzes the hydrolysis of UDP-3-O-myristoyl-N-acetylglucosamine to form UDP-3-O-myristoylglucosamine and acetate, the committed step in lipid A biosynthesis. In Neisseria gonorrhoeae (strain ATCC 700825 / FA 1090), this protein is UDP-3-O-acyl-N-acetylglucosamine deacetylase.